The sequence spans 554 residues: Peroxisomal membrane protein PEX29 (554 aa).

Residues 1–145 (MDSVTNFFWN…PFMIMDELIK (145 aa)) are Cytoplasmic-facing. Composition is skewed to polar residues over residues 11–22 (DTYNAGTPTRST) and 43–53 (ISSGSRTSDPT). The interval 11-73 (DTYNAGTPTR…PTSGGGFPST (63 aa)) is disordered. Over residues 55–64 (GSLPSSSGQP) the composition is skewed to low complexity. The chain crosses the membrane as a helical span at residues 146–166 (ILNWTNPAYTVSIMFLYTLII). Residues 167–172 (LKPFQM) are Peroxisomal-facing. The helical transmembrane segment at 173 to 193 (LSSLPIFYLLFCVMVPQYLYI) threads the bilayer. Residues 194–264 (HKPNPTSYLD…LQKFAFFTNE (71 aa)) lie on the Cytoplasmic side of the membrane. The chain crosses the membrane as a helical span at residues 265–285 (AISSFYFIVLLIIATLNFLYM). Residues 286-287 (DK) are Peroxisomal-facing. A helical transmembrane segment spans residues 288–308 (FIKLIPMRPVLILLGWGFFIA). The Cytoplasmic segment spans residues 309–554 (SHPSNREYLL…ELTDTLNSTI (246 aa)). A disordered region spans residues 500 to 532 (GVTKGSMSGGLTHSSDDDRADEESINGTIPNLN).

This sequence belongs to the PEX28-32 family. PEX29 subfamily.

It is found in the peroxisome membrane. Its function is as follows. Involved in the regulation of peroxisome number, size and distribution. This Saccharomyces cerevisiae (strain ATCC 204508 / S288c) (Baker's yeast) protein is Peroxisomal membrane protein PEX29 (PEX29).